The chain runs to 449 residues: Doublesex- and mab-3-related transcription factor A2 (449 aa).

A DNA-binding region (DM) is located at residues 57-104 (CARCRNHGVVSALKGHKRYCRWKDCMCAKCTLIAERQRVMAAQVALRR). The interval 166-259 (KNQLSGSATP…PSPSSAASRH (94 aa)) is disordered. Positions 167–177 (NQLSGSATPQP) are enriched in polar residues. The span at 230–240 (GSVSSIGSDSG) shows a compositional bias: low complexity. In terms of domain architecture, DMA spans 260-295 (MNAIDILTRVFPSHKRSVLELVLQGCGKDVVQAIEQ).

It belongs to the DMRT family.

It is found in the nucleus. Functionally, may be involved in sexual development. This chain is Doublesex- and mab-3-related transcription factor A2 (dmrta2), found in Oreochromis niloticus (Nile tilapia).